The following is a 769-amino-acid chain: TSC22 domain family protein 2 (769 aa).

4 disordered regions span residues Ala20–Pro86, His224–Met292, Ala334–Pro353, and Val520–Gln563. The segment covering Glu28 to Asp37 has biased composition (acidic residues). The segment covering Gly229–Ala252 has biased composition (polar residues). The span at Gly269–Leu279 shows a compositional bias: low complexity. A compositionally biased stretch (low complexity) spans Ser531 to Ser541. Positions Val542–Gln563 are enriched in polar residues. A coiled-coil region spans residues Met691 to Leu725. A compositionally biased stretch (polar residues) spans Ser726 to Ser745. The segment at Ser726–Ala769 is disordered. Positions Pro754–Gln763 are enriched in pro residues.

It belongs to the TSC-22/Dip/Bun family. As to quaternary structure, interacts with NRBP1. Interacts with PKM isoform M2; the interaction results in reduced nuclear levels of PKM isoform M2, leading to repression of cyclin CCND1 transcription and reduced cell growth. Interacts with WDR77. In terms of tissue distribution, expressed in the cortex, medulla and papilla of the kidney. As to expression, expressed in the kidney.

Reduces the level of nuclear PKM isoform M2 which results in repression of cyclin CCND1 transcription and reduced cell growth. In terms of biological role, may protect kidney cells from hyperosmotic stress. The protein is TSC22 domain family protein 2 of Mus musculus (Mouse).